We begin with the raw amino-acid sequence, 365 residues long: Ribosomal RNA large subunit methyltransferase F (365 aa).

Residues methionine 1–proline 48 are disordered. The span at alanine 33 to proline 48 shows a compositional bias: basic and acidic residues.

Belongs to the methyltransferase superfamily. METTL16/RlmF family.

The protein resides in the cytoplasm. It carries out the reaction adenosine(1618) in 23S rRNA + S-adenosyl-L-methionine = N(6)-methyladenosine(1618) in 23S rRNA + S-adenosyl-L-homocysteine + H(+). Functionally, specifically methylates the adenine in position 1618 of 23S rRNA. This Shewanella baltica (strain OS223) protein is Ribosomal RNA large subunit methyltransferase F.